The following is a 365-amino-acid chain: Cytochrome P450 71A3 (365 aa).

Belongs to the cytochrome P450 family. Heme is required as a cofactor.

Its function is as follows. May have a role in maturation, such as during flavor formation or other metabolite production specific to aging tissues. The protein is Cytochrome P450 71A3 (CYP71A3) of Solanum melongena (Eggplant).